Reading from the N-terminus, the 252-residue chain is Imidazole glycerol phosphate synthase subunit HisF (252 aa).

Active-site residues include Asp-11 and Asp-130.

This sequence belongs to the HisA/HisF family. Heterodimer of HisH and HisF.

Its subcellular location is the cytoplasm. The catalysed reaction is 5-[(5-phospho-1-deoxy-D-ribulos-1-ylimino)methylamino]-1-(5-phospho-beta-D-ribosyl)imidazole-4-carboxamide + L-glutamine = D-erythro-1-(imidazol-4-yl)glycerol 3-phosphate + 5-amino-1-(5-phospho-beta-D-ribosyl)imidazole-4-carboxamide + L-glutamate + H(+). Its pathway is amino-acid biosynthesis; L-histidine biosynthesis; L-histidine from 5-phospho-alpha-D-ribose 1-diphosphate: step 5/9. In terms of biological role, IGPS catalyzes the conversion of PRFAR and glutamine to IGP, AICAR and glutamate. The HisF subunit catalyzes the cyclization activity that produces IGP and AICAR from PRFAR using the ammonia provided by the HisH subunit. The sequence is that of Imidazole glycerol phosphate synthase subunit HisF from Bacillus cereus (strain ZK / E33L).